The primary structure comprises 184 residues: Cell division protein ZapC (184 aa).

The protein belongs to the ZapC family. Interacts directly with FtsZ.

It localises to the cytoplasm. Functionally, contributes to the efficiency of the cell division process by stabilizing the polymeric form of the cell division protein FtsZ. Acts by promoting interactions between FtsZ protofilaments and suppressing the GTPase activity of FtsZ. This is Cell division protein ZapC from Idiomarina loihiensis (strain ATCC BAA-735 / DSM 15497 / L2-TR).